The following is a 261-amino-acid chain: Carnitinyl-CoA dehydratase (261 aa).

The active-site Nucleophile is the Glu111. Catalysis depends on Glu131, which acts as the Proton acceptor.

Belongs to the enoyl-CoA hydratase/isomerase family.

The catalysed reaction is (R)-carnitinyl-CoA = crotonobetainyl-CoA + H2O. The protein operates within amine and polyamine metabolism; carnitine metabolism. In terms of biological role, catalyzes the reversible dehydration of L-carnitinyl-CoA to crotonobetainyl-CoA. In Salmonella enteritidis PT4 (strain P125109), this protein is Carnitinyl-CoA dehydratase.